We begin with the raw amino-acid sequence, 56 residues long: Large ribosomal subunit protein bL32 (56 aa).

The segment at 1 to 27 (MAVQQNKKSRSRRDMRRSHDALTTAAV) is disordered. A compositionally biased stretch (basic residues) spans 7–16 (KKSRSRRDMR).

The protein belongs to the bacterial ribosomal protein bL32 family.

This is Large ribosomal subunit protein bL32 from Actinobacillus pleuropneumoniae serotype 7 (strain AP76).